The primary structure comprises 478 residues: Puromycin-sensitive aminopeptidase-like protein (478 aa).

Residues E180 and 316 to 320 contribute to the substrate site; that span reads GAMEN. H352 lines the Zn(2+) pocket. Residue E353 is the Proton acceptor of the active site. H356 and E375 together coordinate Zn(2+).

Belongs to the peptidase M1 family. It depends on Zn(2+) as a cofactor.

Aminopeptidase with broad substrate specificity to several peptides. The protein is Puromycin-sensitive aminopeptidase-like protein (NPEPPSL1) of Homo sapiens (Human).